A 336-amino-acid polypeptide reads, in one-letter code: Electron transfer flavoprotein subunit alpha (336 aa).

275 to 303 contributes to the FAD binding site; sequence LYIACGISGAIQHLAGMQDSDYIIAINKD.

It belongs to the ETF alpha-subunit/FixB family. In terms of assembly, heterodimer of an alpha and a beta subunit. FAD is required as a cofactor.

Functionally, the electron transfer flavoprotein serves as a specific electron acceptor for other dehydrogenases. It transfers the electrons to the main respiratory chain via ETF-ubiquinone oxidoreductase (ETF dehydrogenase). The polypeptide is Electron transfer flavoprotein subunit alpha (etfA) (Clostridium acetobutylicum (strain ATCC 824 / DSM 792 / JCM 1419 / IAM 19013 / LMG 5710 / NBRC 13948 / NRRL B-527 / VKM B-1787 / 2291 / W)).